The sequence spans 327 residues: o-succinylbenzoate synthase (327 aa).

Lys-110 functions as the Proton donor in the catalytic mechanism. Residues Asp-138, Glu-165, and Asp-188 each coordinate Mg(2+). Lys-212 acts as the Proton acceptor in catalysis.

This sequence belongs to the mandelate racemase/muconate lactonizing enzyme family. MenC type 1 subfamily. A divalent metal cation is required as a cofactor.

The catalysed reaction is (1R,6R)-6-hydroxy-2-succinyl-cyclohexa-2,4-diene-1-carboxylate = 2-succinylbenzoate + H2O. Its pathway is quinol/quinone metabolism; 1,4-dihydroxy-2-naphthoate biosynthesis; 1,4-dihydroxy-2-naphthoate from chorismate: step 4/7. It functions in the pathway quinol/quinone metabolism; menaquinone biosynthesis. Converts 2-succinyl-6-hydroxy-2,4-cyclohexadiene-1-carboxylate (SHCHC) to 2-succinylbenzoate (OSB). This chain is o-succinylbenzoate synthase, found in Mycobacterium ulcerans (strain Agy99).